The primary structure comprises 120 residues: Large ribosomal subunit protein bL12 (120 aa).

Belongs to the bacterial ribosomal protein bL12 family. Homodimer. Part of the ribosomal stalk of the 50S ribosomal subunit. Forms a multimeric L10(L12)X complex, where L10 forms an elongated spine to which 2 to 4 L12 dimers bind in a sequential fashion. Binds GTP-bound translation factors.

Forms part of the ribosomal stalk which helps the ribosome interact with GTP-bound translation factors. Is thus essential for accurate translation. The chain is Large ribosomal subunit protein bL12 from Haemophilus ducreyi (strain 35000HP / ATCC 700724).